Reading from the N-terminus, the 444-residue chain is Histidinol dehydrogenase (444 aa).

3 residues coordinate NAD(+): Tyr-135, Gln-199, and Asn-227. 3 residues coordinate substrate: Thr-250, Gln-272, and His-275. Zn(2+) contacts are provided by Gln-272 and His-275. Catalysis depends on proton acceptor residues Glu-341 and His-342. Substrate-binding residues include His-342, Asp-375, Glu-429, and His-434. Asp-375 is a Zn(2+) binding site. A Zn(2+)-binding site is contributed by His-434.

Belongs to the histidinol dehydrogenase family. Zn(2+) is required as a cofactor.

It catalyses the reaction L-histidinol + 2 NAD(+) + H2O = L-histidine + 2 NADH + 3 H(+). It participates in amino-acid biosynthesis; L-histidine biosynthesis; L-histidine from 5-phospho-alpha-D-ribose 1-diphosphate: step 9/9. Its function is as follows. Catalyzes the sequential NAD-dependent oxidations of L-histidinol to L-histidinaldehyde and then to L-histidine. The chain is Histidinol dehydrogenase (hisD) from Mycobacterium bovis (strain ATCC BAA-935 / AF2122/97).